Consider the following 72-residue polypeptide: Conorfamide-Tx2 (72 aa).

The signal sequence occupies residues 1–19 (MSGRGFLLLALLLLVTVEA). A propeptide spanning residues 20-25 (TRVEKK) is cleaved from the precursor. Positions 32–39 (AWSGPRNR) are positively charged region crucial for activity against MRGPRX1 receptors. Position 43 is an isoleucine amide (Ile43). Positions 44-72 (GRRDMQSPLLSERLRFRALGFRQPSSQKQ) are excised as a propeptide.

This sequence belongs to the FARP (FMRFamide related peptide) family. As to expression, expressed by the venom duct.

The protein resides in the secreted. Its function is as follows. This peptide activates human sensory neuron-specific G-protein coupled receptors MRGPRX1, but not mouse receptors (EC(50)=0.54 uM). Compared with the agonist chloroquine (anti-malaria drug), it is 600-fold more potent. In vivo, induces itch sensation, since intradermal cheek injection into humanized transgenic mouse (mouse MRGPRX1 replaced by human MRGPRX1) induces scratching. In vivo, treatment of zebrafish larvae with high doses (10 uM) induces hypoactivity at the beginning of the experiment during the dark phase and hyperactivity in the strobe phase after one hour, even after the removal of the toxin from the solution. This chain is Conorfamide-Tx2, found in Conus textile (Cloth-of-gold cone).